Consider the following 246-residue polypeptide: tRNA pseudouridine synthase A (246 aa).

Aspartate 52 acts as the Nucleophile in catalysis. Tyrosine 111 contributes to the substrate binding site.

The protein belongs to the tRNA pseudouridine synthase TruA family. As to quaternary structure, homodimer.

It catalyses the reaction uridine(38/39/40) in tRNA = pseudouridine(38/39/40) in tRNA. Functionally, formation of pseudouridine at positions 38, 39 and 40 in the anticodon stem and loop of transfer RNAs. The chain is tRNA pseudouridine synthase A from Parvibaculum lavamentivorans (strain DS-1 / DSM 13023 / NCIMB 13966).